Here is a 301-residue protein sequence, read N- to C-terminus: ATP synthase gamma chain (301 aa).

This sequence belongs to the ATPase gamma chain family. F-type ATPases have 2 components, CF(1) - the catalytic core - and CF(0) - the membrane proton channel. CF(1) has five subunits: alpha(3), beta(3), gamma(1), delta(1), epsilon(1). CF(0) has three main subunits: a, b and c.

It is found in the cell inner membrane. In terms of biological role, produces ATP from ADP in the presence of a proton gradient across the membrane. The gamma chain is believed to be important in regulating ATPase activity and the flow of protons through the CF(0) complex. This Helicobacter acinonychis (strain Sheeba) protein is ATP synthase gamma chain.